The chain runs to 119 residues: Large ribosomal subunit protein bL12 (119 aa).

Belongs to the bacterial ribosomal protein bL12 family. In terms of assembly, homodimer. Part of the ribosomal stalk of the 50S ribosomal subunit. Forms a multimeric L10(L12)X complex, where L10 forms an elongated spine to which 2 to 4 L12 dimers bind in a sequential fashion. Binds GTP-bound translation factors.

In terms of biological role, forms part of the ribosomal stalk which helps the ribosome interact with GTP-bound translation factors. Is thus essential for accurate translation. This is Large ribosomal subunit protein bL12 from Lysinibacillus sphaericus (strain C3-41).